The chain runs to 414 residues: Histidine--tRNA ligase (414 aa).

This sequence belongs to the class-II aminoacyl-tRNA synthetase family. In terms of assembly, homodimer.

It localises to the cytoplasm. The catalysed reaction is tRNA(His) + L-histidine + ATP = L-histidyl-tRNA(His) + AMP + diphosphate + H(+). The protein is Histidine--tRNA ligase of Mycoplasma capricolum subsp. capricolum (strain California kid / ATCC 27343 / NCTC 10154).